The sequence spans 332 residues: Fructose-1,6-bisphosphatase class 1 (332 aa).

4 residues coordinate Mg(2+): Glu89, Asp110, Leu112, and Asp113. Substrate is bound by residues 113-116 (DGSS), Asn206, Tyr239, 257-259 (YLY), and Lys269. Glu275 is a Mg(2+) binding site.

This sequence belongs to the FBPase class 1 family. Homotetramer. It depends on Mg(2+) as a cofactor.

It is found in the cytoplasm. The enzyme catalyses beta-D-fructose 1,6-bisphosphate + H2O = beta-D-fructose 6-phosphate + phosphate. It functions in the pathway carbohydrate biosynthesis; gluconeogenesis. The polypeptide is Fructose-1,6-bisphosphatase class 1 (Salmonella typhi).